The primary structure comprises 399 residues: Tryptophan synthase beta chain (399 aa).

The residue at position 92 (Lys92) is an N6-(pyridoxal phosphate)lysine.

This sequence belongs to the TrpB family. In terms of assembly, tetramer of two alpha and two beta chains. It depends on pyridoxal 5'-phosphate as a cofactor.

The catalysed reaction is (1S,2R)-1-C-(indol-3-yl)glycerol 3-phosphate + L-serine = D-glyceraldehyde 3-phosphate + L-tryptophan + H2O. The protein operates within amino-acid biosynthesis; L-tryptophan biosynthesis; L-tryptophan from chorismate: step 5/5. Its function is as follows. The beta subunit is responsible for the synthesis of L-tryptophan from indole and L-serine. This Bordetella petrii (strain ATCC BAA-461 / DSM 12804 / CCUG 43448) protein is Tryptophan synthase beta chain.